Consider the following 319-residue polypeptide: ATP-dependent 6-phosphofructokinase (319 aa).

Residue Gly-11 coordinates ATP. 21–25 (RAVVR) provides a ligand contact to ADP. ATP is bound by residues 72–73 (RC) and 102–105 (GEGS). Glu-103 contacts Mg(2+). 126 to 128 (TID) lines the substrate pocket. The active-site Proton acceptor is the Asp-128. Position 155 (Lys-155) interacts with ADP. Residues Arg-163 and 170–172 (MGR) contribute to the substrate site. Residues 186–188 (GAE), Arg-212, and 214–216 (KIN) contribute to the ADP site. Substrate contacts are provided by residues Glu-223, Arg-244, and 250-253 (HVQR).

Belongs to the phosphofructokinase type A (PFKA) family. ATP-dependent PFK group I subfamily. Prokaryotic clade 'B1' sub-subfamily. In terms of assembly, homotetramer. The cofactor is Mg(2+).

The protein resides in the cytoplasm. It carries out the reaction beta-D-fructose 6-phosphate + ATP = beta-D-fructose 1,6-bisphosphate + ADP + H(+). It participates in carbohydrate degradation; glycolysis; D-glyceraldehyde 3-phosphate and glycerone phosphate from D-glucose: step 3/4. Its activity is regulated as follows. Allosterically activated by ADP and other diphosphonucleosides, and allosterically inhibited by phosphoenolpyruvate. In terms of biological role, catalyzes the phosphorylation of D-fructose 6-phosphate to fructose 1,6-bisphosphate by ATP, the first committing step of glycolysis. The polypeptide is ATP-dependent 6-phosphofructokinase (Thermotoga petrophila (strain ATCC BAA-488 / DSM 13995 / JCM 10881 / RKU-1)).